We begin with the raw amino-acid sequence, 172 residues long: 16S rRNA aminocarboxypropyltransferase (172 aa).

The S-adenosyl-L-methionine site is built by T21, L71, L93, and T112.

This sequence belongs to the TDD superfamily. TSR3 family.

It is found in the cytoplasm. It catalyses the reaction an N(1)-methylpseudouridine in rRNA + S-adenosyl-L-methionine = N(1)-methyl-N(3)-[(3S)-3-amino-3-carboxypropyl]pseudouridine in rRNA + S-methyl-5'-thioadenosine + H(+). In terms of biological role, aminocarboxypropyltransferase that catalyzes the aminocarboxypropyl transfer on pseudouridine at position 914 in 16S rRNA. It constitutes the last step in biosynthesis of the hypermodified N1-methyl-N3-(3-amino-3-carboxypropyl) pseudouridine (m1acp3-Psi). This is 16S rRNA aminocarboxypropyltransferase from Methanocaldococcus jannaschii (strain ATCC 43067 / DSM 2661 / JAL-1 / JCM 10045 / NBRC 100440) (Methanococcus jannaschii).